The primary structure comprises 144 residues: Large ribosomal subunit protein uL15 (144 aa).

The disordered stretch occupies residues 1-49; that stretch reads MIKLECLQDPSPRKRRTKLLGRGPSSGHGKTSSRGHKGDCSRSGYKRRF.

The protein belongs to the universal ribosomal protein uL15 family. In terms of assembly, part of the 50S ribosomal subunit.

Its function is as follows. Binds to the 23S rRNA. This Chlamydia trachomatis serovar A (strain ATCC VR-571B / DSM 19440 / HAR-13) protein is Large ribosomal subunit protein uL15.